The following is a 434-amino-acid chain: Tol-Pal system protein TolB (434 aa).

Residues 1–28 (MQQTCKRKIWMQISVALVTSLWMISAQA) form the signal peptide.

This sequence belongs to the TolB family. The Tol-Pal system is composed of five core proteins: the inner membrane proteins TolA, TolQ and TolR, the periplasmic protein TolB and the outer membrane protein Pal. They form a network linking the inner and outer membranes and the peptidoglycan layer.

Its subcellular location is the periplasm. Part of the Tol-Pal system, which plays a role in outer membrane invagination during cell division and is important for maintaining outer membrane integrity. This Alcanivorax borkumensis (strain ATCC 700651 / DSM 11573 / NCIMB 13689 / SK2) protein is Tol-Pal system protein TolB.